The chain runs to 402 residues: LIM/homeobox protein Lhx5 (402 aa).

2 consecutive LIM zinc-binding domains span residues 3–61 (AHCA…RRFG) and 62–125 (TKCA…ASSL). Disordered stretches follow at residues 133-187 (VSSC…RTTI), 291-335 (NYDF…GHHP), and 365-392 (SGEVFTGGPSPPFSMSNNSGFSGPLPHQ). A compositionally biased stretch (basic and acidic residues) spans 151–167 (DESKETDHSTSSDKETA). The homeobox DNA-binding region spans 180–239 (RRGPRTTIKAKQLETLKAAFIATPKPTRHIREQLAQETGLNMRVIQVWFQNRRSKERRMK). The span at 300–319 (PSSQTQSPADSSYLQNSGPG) shows a compositional bias: polar residues.

Interacts with ldb1 and with the N-terminus of rnf12.

The protein resides in the nucleus. Functionally, probably involved in the patterning of the nervous system, in particular in the early specification of the diencephalon. This is LIM/homeobox protein Lhx5 (lhx5) from Xenopus laevis (African clawed frog).